We begin with the raw amino-acid sequence, 473 residues long: MKTLYSLRRFYPVETLFNGTLALAGRDQETTGFAWWAGNARLINLSGKLLGAHVAHAGLIVFWAGAMNLFEVAHFVPEKPMYEQGLILLPHLATLGWGVGPGGEVIDTFPYFVSGVLHLISSAVLGFGGIYHALLGPETLEESFPFFGYVWKDRNKMTTILGIHLILLGIGAFLLVLKALYFGGVYDTWAPGGGDVRKITNLTLSPGVIFGYLLKSPFGGEGWIVSVDDLEDIIGGHVWLGSICILGGIWHILTKPFAWARRAFVWSGEAYLSYSLGALSVFGFIACCFVWFNNTAYPSEFYGPTGPEASQAQAFTFLVRDQRLGANVGSAQGPTGLGKYLMRSPTGEVIFGGETMRFWDLRAPWLEPLRGPNGLDLSRLKKDIQPWQERRSAEYMTHAPLGSLNSVGGVATEINAVNYVSPRSWLATSHFVLGFFLFVGHLWHAGRARAAAAGFEKGIDRDFEPVLSMTPLN.

The propeptide occupies 1-14 (MKTLYSLRRFYPVE). Position 15 is an N-acetylthreonine (Thr-15). Thr-15 carries the phosphothreonine modification. 5 helical membrane passes run 69 to 93 (LFEVAHFVPEKPMYEQGLILLPHLA), 134 to 155 (LLGPETLEESFPFFGYVWKDRN), 178 to 200 (KALYFGGVYDTWAPGGGDVRKIT), 255 to 275 (KPFAWARRAFVWSGEAYLSYS), and 291 to 312 (WFNNTAYPSEFYGPTGPEASQA). Residue Glu-367 participates in [CaMn4O5] cluster binding. Residues 447-471 (RARAAAAGFEKGIDRDFEPVLSMTP) traverse the membrane as a helical segment.

Belongs to the PsbB/PsbC family. PsbC subfamily. In terms of assembly, PSII is composed of 1 copy each of membrane proteins PsbA, PsbB, PsbC, PsbD, PsbE, PsbF, PsbH, PsbI, PsbJ, PsbK, PsbL, PsbM, PsbT, PsbX, PsbY, PsbZ, Psb30/Ycf12, at least 3 peripheral proteins of the oxygen-evolving complex and a large number of cofactors. It forms dimeric complexes. The cofactor is Binds multiple chlorophylls and provides some of the ligands for the Ca-4Mn-5O cluster of the oxygen-evolving complex. It may also provide a ligand for a Cl- that is required for oxygen evolution. PSII binds additional chlorophylls, carotenoids and specific lipids..

The protein localises to the plastid. It is found in the chloroplast thylakoid membrane. Its function is as follows. One of the components of the core complex of photosystem II (PSII). It binds chlorophyll and helps catalyze the primary light-induced photochemical processes of PSII. PSII is a light-driven water:plastoquinone oxidoreductase, using light energy to abstract electrons from H(2)O, generating O(2) and a proton gradient subsequently used for ATP formation. The sequence is that of Photosystem II CP43 reaction center protein from Calycanthus floridus var. glaucus (Eastern sweetshrub).